We begin with the raw amino-acid sequence, 434 residues long: Transcriptional enhancer factor TEF-3 (434 aa).

Positions 1-28 (MEGTAGTITSNEWSSPTSPEGSTASGGS) are enriched in polar residues. Disordered regions lie at residues 1–42 (MEGT…AEGV) and 188–215 (QPPL…PPWQ). The TEA DNA-binding region spans 36–112 (DNDAEGVWSP…QVLARRKARE (77 aa)). Positions 201-213 (GPAPSPSAPPAPP) are enriched in pro residues.

As to quaternary structure, interacts with YAP1 and WWTR1/TAZ. In terms of tissue distribution, preferentially expressed in skeletal muscle. Lower levels in pancreas, placenta, and heart.

It localises to the nucleus. In terms of biological role, transcription factor which plays a key role in the Hippo signaling pathway, a pathway involved in organ size control and tumor suppression by restricting proliferation and promoting apoptosis. The core of this pathway is composed of a kinase cascade wherein MST1/MST2, in complex with its regulatory protein SAV1, phosphorylates and activates LATS1/2 in complex with its regulatory protein MOB1, which in turn phosphorylates and inactivates YAP1 oncoprotein and WWTR1/TAZ. Acts by mediating gene expression of YAP1 and WWTR1/TAZ, thereby regulating cell proliferation, migration and epithelial mesenchymal transition (EMT) induction. Binds specifically and non-cooperatively to the Sph and GT-IIC 'enhansons' (5'-GTGGAATGT-3') and activates transcription. Binds to the M-CAT motif. This is Transcriptional enhancer factor TEF-3 (TEAD4) from Homo sapiens (Human).